Here is a 416-residue protein sequence, read N- to C-terminus: Squalene synthase (416 aa).

Residues arginine 52 and arginine 77 each contribute to the NADP(+) site. 3 residues coordinate Mg(2+): aspartate 80, glutamate 83, and aspartate 84. Arginine 218 is an NADP(+) binding site. A helical transmembrane segment spans residues 284 to 304 (SVFNFCAIPQVMAIATLAACY). NADP(+) is bound by residues lysine 315 and arginine 317. Residues 384 to 404 (PIYLSFIMLLAALSWQYLSTL) traverse the membrane as a helical segment.

It belongs to the phytoene/squalene synthase family. Mg(2+) is required as a cofactor.

The protein localises to the endoplasmic reticulum membrane. The enzyme catalyses 2 (2E,6E)-farnesyl diphosphate + NADPH + H(+) = squalene + 2 diphosphate + NADP(+). It carries out the reaction 2 (2E,6E)-farnesyl diphosphate + NADH + H(+) = squalene + 2 diphosphate + NAD(+). The catalysed reaction is presqualene diphosphate + NADH + H(+) = squalene + diphosphate + NAD(+). It catalyses the reaction presqualene diphosphate + NADPH + H(+) = squalene + diphosphate + NADP(+). The enzyme catalyses 2 (2E,6E)-farnesyl diphosphate = presqualene diphosphate + diphosphate. It participates in terpene metabolism; lanosterol biosynthesis; lanosterol from farnesyl diphosphate: step 1/3. Functionally, catalyzes the condensation of 2 farnesyl pyrophosphate (FPP) moieties to form squalene. Proceeds in two distinct steps. In the first half-reaction, two molecules of FPP react to form the stable presqualene diphosphate intermediate (PSQPP), with concomitant release of a proton and a molecule of inorganic diphosphate. In the second half-reaction, PSQPP undergoes heterolysis, isomerization, and reduction with NADPH or NADH to form squalene. It is the first committed enzyme of the sterol biosynthesis pathway. The chain is Squalene synthase (Fdft1) from Mus musculus (Mouse).